The sequence spans 62 residues: Large ribosomal subunit protein bL32m (62 aa).

The protein belongs to the bacterial ribosomal protein bL32 family.

It is found in the mitochondrion. This Reclinomonas americana protein is Large ribosomal subunit protein bL32m (RPL32).